The primary structure comprises 534 residues: 2,3-bisphosphoglycerate-independent phosphoglycerate mutase (534 aa).

Asp-15 and Ser-65 together coordinate Mn(2+). Ser-65 acts as the Phosphoserine intermediate in catalysis. Residues His-126, 156–157 (RD), Arg-188, Arg-194, 261–264 (RPDR), and Lys-334 each bind substrate. Residues Asp-401, His-405, Asp-442, His-443, and His-460 each coordinate Mn(2+).

Belongs to the BPG-independent phosphoglycerate mutase family. Mn(2+) serves as cofactor.

It is found in the plastid. Its subcellular location is the chloroplast. The catalysed reaction is (2R)-2-phosphoglycerate = (2R)-3-phosphoglycerate. Its pathway is carbohydrate degradation; glycolysis; pyruvate from D-glyceraldehyde 3-phosphate: step 3/5. Catalyzes the interconversion of 2-phosphoglycerate and 3-phosphoglycerate. The polypeptide is 2,3-bisphosphoglycerate-independent phosphoglycerate mutase (Pyropia yezoensis (Susabi-nori)).